We begin with the raw amino-acid sequence, 119 residues long: Large ribosomal subunit protein bL20 (119 aa).

It belongs to the bacterial ribosomal protein bL20 family.

Its function is as follows. Binds directly to 23S ribosomal RNA and is necessary for the in vitro assembly process of the 50S ribosomal subunit. It is not involved in the protein synthesizing functions of that subunit. The protein is Large ribosomal subunit protein bL20 of Deinococcus geothermalis (strain DSM 11300 / CIP 105573 / AG-3a).